A 709-amino-acid chain; its full sequence is SH3 domain-containing kinase-binding protein 1 (709 aa).

SH3 domains follow at residues 1–58 and 98–157; these read MVEA…EIKK and RRRR…ELSG. Phosphoserine occurs at positions 156, 159, 227, and 274. Residues 221–239 are compositionally biased toward low complexity; that stretch reads ETTGSESDGGDSSSTKSEG. The interval 221–242 is disordered; the sequence is ETTGSESDGGDSSSTKSEGANG. Disordered stretches follow at residues 289 to 309, 372 to 485, and 511 to 650; these read GKKL…MDSR, SDFD…KIDL, and DSVI…VSSQ. At threonine 298 the chain carries Phosphothreonine. One can recognise an SH3 3 domain in the interval 311–372; the sequence is KTKDYCKVIF…PDNFVKLLPS (62 aa). Positions 399–434 are enriched in basic and acidic residues; that stretch reads TERKHEIKKIPPERPETLPNRTEEKERPEREPKLDL. Serine 480 is subject to Phosphoserine. Positions 513–528 are enriched in polar residues; it reads VISSTEKLSHPTTSRP. The segment covering 535-554 has biased composition (low complexity); it reads PPSQSLTSSSLSSPDIFDSP. Serine 553, serine 555, and serine 565 each carry phosphoserine. Basic and acidic residues predominate over residues 561–575; sequence EEHISLAHRGIDVSK. Polar residues predominate over residues 579–592; sequence KTVTISQVSDNKTS. The segment covering 600–623 has biased composition (low complexity); sequence MAAASSGPASLSSVASSPMSSSLG. The segment covering 627–636 has biased composition (polar residues); that stretch reads QRASSPSLFS. At serine 631 the chain carries Phosphoserine. Positions 646–708 form a coiled coil; the sequence is AVSSQAAIEE…VNDIKKALQS (63 aa).

As to quaternary structure, can self-associate and form homotetramers. Interacts with CD2, F-actin capping protein, PIK3R3, GRB2, EGFR, MET, BLNK, MAP3K4, PDCD6IP, SPRY2, ARHGAP17, ARHGAP27, CRK, BCAR1, SOS1, ASAP1, ARAP3, HIP1R, SYNJ2, INPP5D and STAP1. Interacts with E3 ubiquitin-protein ligase CBL. Interacts with CBLB, but does not interact with CBLC. Two molecules of SH3KBP1 seem to bind through their respective SH3 1 domain to one molecule of CBLB. The interaction with CBL or CBLB and EGFR is increased upon EGF stimulation. The interaction with CBL is attenuated by PDCD6IP. Interacts (via SH3 domains) with ARAP1. The interaction is independent of EGF and does not affect ARAP1 GTPase-activating activity but is involved in regulating ubiquitination and endocytic trafficking of EGFR. ARAP1 competes with CBL for binding to SH3KBP1 and prevents interaction of CBL with SH3KBP1; this is likely to regulate SH3KBP1-mediated internalization of EGFR. Interacts through its proline-rich region with the SH3 domain of endophilins SH3GL1, SH3GL2 and SH3GL3. The SH3KBP1-endophilin complex seems to associate with a complex containing the phosphorylated receptor (EGFR or MET) and phosphorylated CBL. Probably associates with ASAP1 and phosphorylated EGFR. Probably part of a complex consisting of at least SH3KBP1, ASAP1 and ARAP3. Interacts with focal adhesion kinases PTK2/FAK1 and PTK2B/PYK2, probably as a dimer. Interacts with DAB2 and probably associates with chathrin through its interaction with DAB2. Part of a complex consisting of SH3KBP1, DAB2, and clathrin heavy chain. DAB2 and clathrin dissociate from SH3KBP1 following growth factor treatment, enabling interaction with CBL. Interacts with DDN and probably associates with MAGI2 through its interaction with DDN. Interacts with the SH3 domains of SRC tyrosine-protein kinases SRC, LCK, LYN, FGR, FYN and HCK. Interacts with TRADD, BIRC2, TRAF1, TRAF2 and TNFR1, and the association with a TNFR1-associated complex upon stimulation with TNF-alpha seems to be mediated by SRC. Probably part of a complex consisting of at least SH3KBP1, ASAP1 and ARAP3. Interacts (via SH3 domains) with SHKBP1 (via PXXXPR motifs). Interacts with ATX2. Interaction with CBL is abolished in the presence of SHKBP1. Interacts (via SH3 domains) with ZFP36 (via extreme C-terminal region). Interacts with MAP3K4; this interaction enhances the association with ZFP36. Monoubiquitinated by CBL and CBLB after EGF stimulation; probably on its C-terminus.

It localises to the cytoplasm. The protein localises to the cytoskeleton. Its subcellular location is the cytoplasmic vesicle membrane. It is found in the synapse. The protein resides in the synaptosome. It localises to the cell junction. The protein localises to the focal adhesion. In terms of biological role, adapter protein involved in regulating diverse signal transduction pathways. Involved in the regulation of endocytosis and lysosomal degradation of ligand-induced receptor tyrosine kinases, including EGFR and MET/hepatocyte growth factor receptor, through an association with CBL and endophilins. The association with CBL, and thus the receptor internalization, may be inhibited by an interaction with PDCD6IP and/or SPRY2. Involved in regulation of ligand-dependent endocytosis of the IgE receptor. Attenuates phosphatidylinositol 3-kinase activity by interaction with its regulatory subunit. May be involved in regulation of cell adhesion; promotes the interaction between TTK2B and PDCD6IP. May be involved in the regulation of cellular stress response via the MAPK pathways through its interaction with MAP3K4. Is involved in modulation of tumor necrosis factor mediated apoptosis. Plays a role in the regulation of cell morphology and cytoskeletal organization. Required in the control of cell shape and migration. Has an essential role in the stimulation of B cell activation. The chain is SH3 domain-containing kinase-binding protein 1 (Sh3kbp1) from Mus musculus (Mouse).